A 172-amino-acid chain; its full sequence is Centrin-2 (172 aa).

Residues 1 to 31 (MASNFKKANMASTTQRKRMSPKPELTEEQKQ) are disordered. The residue at position 2 (alanine 2) is an N-acetylalanine. The tract at residues 2-25 (ASNFKKANMASTTQRKRMSPKPEL) is required for self-assembly. Position 20 is a phosphoserine (serine 20). Lysine 22 participates in a covalent cross-link: Glycyl lysine isopeptide (Lys-Gly) (interchain with G-Cter in SUMO2). A Phosphothreonine modification is found at threonine 26. EF-hand domains follow at residues 28 to 63 (EQKQ…LGFE), 64 to 99 (PKKE…KMSE), 101 to 136 (DTKE…LGEN), and 137 to 172 (LSDE…TSLY). Aspartate 41, aspartate 43, threonine 45, threonine 47, and glutamate 52 together coordinate Ca(2+). Ca(2+)-binding residues include aspartate 150, aspartate 152, aspartate 154, glutamate 156, and glutamate 161.

This sequence belongs to the centrin family. In terms of assembly, monomer. Homooligomer. Interacts with CCP110, SFI1. Component of the XPC complex composed of XPC, RAD23B and CETN2. Component of the nuclear pore complex (NPC)-associated TREX-2 complex (transcription and export complex 2), composed of at least GANP, 2 copies of ENY2, PCID2, SEM1/DSS1, and either centrin CETN2 or centrin CETN3. The TREX-2 complex also associates with ALYREF/ALY and with the nucleoporin NUP153. Interacts with USP49. Forms a microtubule-associated complex with POC5, POC1B and FAM161A. Interacts with CCDC15.

The protein resides in the cytoplasm. It localises to the cytoskeleton. The protein localises to the microtubule organizing center. It is found in the centrosome. Its subcellular location is the centriole. The protein resides in the nucleus. It localises to the nucleus envelope. The protein localises to the nuclear pore complex. Plays a fundamental role in microtubule organizing center structure and function. Required for centriole duplication and correct spindle formation. Has a role in regulating cytokinesis and genome stability via cooperation with CALM1 and CCP110. Functionally, involved in global genome nucleotide excision repair (GG-NER) by acting as component of the XPC complex. Cooperatively with RAD23B appears to stabilize XPC. In vitro, stimulates DNA binding of the XPC:RAD23B dimer. Its function is as follows. The XPC complex is proposed to represent the first factor bound at the sites of DNA damage and together with other core recognition factors, XPA, RPA and the TFIIH complex, is part of the pre-incision (or initial recognition) complex. The XPC complex recognizes a wide spectrum of damaged DNA characterized by distortions of the DNA helix such as single-stranded loops, mismatched bubbles or single-stranded overhangs. The orientation of XPC complex binding appears to be crucial for inducing a productive NER. XPC complex is proposed to recognize and to interact with unpaired bases on the undamaged DNA strand which is followed by recruitment of the TFIIH complex and subsequent scanning for lesions in the opposite strand in a 5'-to-3' direction by the NER machinery. Cyclobutane pyrimidine dimers (CPDs) which are formed upon UV-induced DNA damage esacpe detection by the XPC complex due to a low degree of structural perurbation. Instead they are detected by the UV-DDB complex which in turn recruits and cooperates with the XPC complex in the respective DNA repair. In terms of biological role, as a component of the TREX-2 complex, involved in the export of mRNAs to the cytoplasm through the nuclear pores. The polypeptide is Centrin-2 (CETN2) (Bos taurus (Bovine)).